The following is a 158-amino-acid chain: Transcriptional repressor NrdR (158 aa).

A zinc finger lies at 3 to 34 (CPSCQNTDSRVLESRAAEGGRSVRRRRECLNC). Residues 49–139 (ITVIKRNGHR…VYRHFRSVSD (91 aa)) enclose the ATP-cone domain.

Belongs to the NrdR family. It depends on Zn(2+) as a cofactor.

Functionally, negatively regulates transcription of bacterial ribonucleotide reductase nrd genes and operons by binding to NrdR-boxes. The sequence is that of Transcriptional repressor NrdR from Synechococcus sp. (strain CC9311).